Reading from the N-terminus, the 173-residue chain is Peptide methionine sulfoxide reductase MsrA (173 aa).

Cysteine 10 is a catalytic residue.

It belongs to the MsrA Met sulfoxide reductase family.

It catalyses the reaction L-methionyl-[protein] + [thioredoxin]-disulfide + H2O = L-methionyl-(S)-S-oxide-[protein] + [thioredoxin]-dithiol. The enzyme catalyses [thioredoxin]-disulfide + L-methionine + H2O = L-methionine (S)-S-oxide + [thioredoxin]-dithiol. In terms of biological role, has an important function as a repair enzyme for proteins that have been inactivated by oxidation. Catalyzes the reversible oxidation-reduction of methionine sulfoxide in proteins to methionine. In Nautilia profundicola (strain ATCC BAA-1463 / DSM 18972 / AmH), this protein is Peptide methionine sulfoxide reductase MsrA.